A 175-amino-acid polypeptide reads, in one-letter code: Probable DNA-directed RNA polymerase subunit delta (175 aa).

In terms of domain architecture, HTH HARE-type spans 14–81 (CSMIEVVHSV…GENRWGLRSW (68 aa)). Residues 91-175 (ILPQPKPKKK…DETEEEEEEL (85 aa)) form a disordered region. A compositionally biased stretch (acidic residues) spans 106–175 (DGFDDYIEED…DETEEEEEEL (70 aa)).

This sequence belongs to the RpoE family. As to quaternary structure, RNAP is composed of a core of 2 alpha, a beta and a beta' subunits. The core is associated with a delta subunit and one of several sigma factors.

Participates in both the initiation and recycling phases of transcription. In the presence of the delta subunit, RNAP displays an increased specificity of transcription, a decreased affinity for nucleic acids, and an increased efficiency of RNA synthesis because of enhanced recycling. The protein is Probable DNA-directed RNA polymerase subunit delta of Bacillus anthracis.